We begin with the raw amino-acid sequence, 546 residues long: MAAKDVVFGDSARAKMVEGVNILANAVKVTLGPKGRNVVLERSFGGPTVTKDGVSVAKEIELKDKLQNMGAQMVKEVASKTSDNAGDGTTTATVLAQSIVREGMKYVASGMNPMDLKRGIDKAVAAAVEELKKISKPCTTNKEIAQVGAISANSDSSIGDRIAEAMDKVGKEGVITVEDGKSLADELDVVEGMQFDRGYLSPYFINNPDKQVAVLENPFVLLHDKKVSNIRDLLPVLEQVAKAGRPLLIIAEDVEGEALATLVVNNIRGILKTVAVKAPGFGDRRKAMLEDIAILTGGQVIAEETGLTLEKATLAELGQAKRIEVGKENTTIIDGAGEAVNIEARVKQIRTQIEEATSDYDREKLQERVAKLAGGVAVIKVGAATEVEMKEKKARVEDALHATRAAVEEGIVPGGGVALIRARTAIAGLTGVNADQNAGIKIVLRAMEEPLRQIVTNGGEEASVVVAAVAAGKGNYGYNAATGEYVDMVEAGVVDPTKVTRTALQNAASVAGLLLTTDAAVAELPKEDAPMPGGMPGGMGGMGMDM.

ATP is bound by residues 30 to 33, Lys51, 87 to 91, Gly415, 479 to 481, and Asp495; these read TLGP, DGTTT, and NAA. The tract at residues 526–546 is disordered; it reads KEDAPMPGGMPGGMGGMGMDM. Gly residues predominate over residues 534-546; it reads GMPGGMGGMGMDM.

Belongs to the chaperonin (HSP60) family. Forms a cylinder of 14 subunits composed of two heptameric rings stacked back-to-back. Interacts with the co-chaperonin GroES.

It is found in the cytoplasm. It catalyses the reaction ATP + H2O + a folded polypeptide = ADP + phosphate + an unfolded polypeptide.. In terms of biological role, together with its co-chaperonin GroES, plays an essential role in assisting protein folding. The GroEL-GroES system forms a nano-cage that allows encapsulation of the non-native substrate proteins and provides a physical environment optimized to promote and accelerate protein folding. This Burkholderia pseudomallei (strain K96243) protein is Chaperonin GroEL 1.